Consider the following 392-residue polypeptide: Heavy metal-associated isoprenylated plant protein 6 (392 aa).

Positions Met1–Thr19 are enriched in basic and acidic residues. The interval Met1–Gly22 is disordered. The region spanning Ile23–Val86 is the HMA 1 domain. 2 residues coordinate Cd(2+): Cys34 and Cys37. The segment at Val89–Val157 is disordered. Residues Ala106 to Ala145 are compositionally biased toward basic and acidic residues. An HMA 2 domain is found at Glu153–Val216. Positions 164 and 167 each coordinate Cd(2+). The segment covering Lys258–Val270 has biased composition (basic and acidic residues). 2 disordered regions span residues Lys258–Gly285 and Gly350–Met392. Residues Val272–Gly285 show a composition bias toward gly residues. At Cys389 the chain carries Cysteine methyl ester. Cys389 carries S-farnesyl cysteine lipidation. Residues Ser390 to Met392 constitute a propeptide, removed in mature form.

Belongs to the HIPP family. As to expression, expressed in petioles, hypocotyls, peduncles, vascular bundles and root meristems.

The protein resides in the cell membrane. Its function is as follows. Heavy-metal-binding protein. Involved in the maintenance of heavy metal homeostasis and/or in detoxification. The polypeptide is Heavy metal-associated isoprenylated plant protein 6 (Arabidopsis thaliana (Mouse-ear cress)).